Consider the following 120-residue polypeptide: NAD(P)H-quinone oxidoreductase subunit 3, chloroplastic (120 aa).

A run of 3 helical transmembrane segments spans residues 9 to 29 (IFWT…WISG), 64 to 84 (MFAL…PWAM), and 88 to 108 (VLGV…VVGL).

It belongs to the complex I subunit 3 family. As to quaternary structure, NDH is composed of at least 16 different subunits, 5 of which are encoded in the nucleus.

The protein resides in the plastid. It localises to the chloroplast thylakoid membrane. The catalysed reaction is a plastoquinone + NADH + (n+1) H(+)(in) = a plastoquinol + NAD(+) + n H(+)(out). It carries out the reaction a plastoquinone + NADPH + (n+1) H(+)(in) = a plastoquinol + NADP(+) + n H(+)(out). NDH shuttles electrons from NAD(P)H:plastoquinone, via FMN and iron-sulfur (Fe-S) centers, to quinones in the photosynthetic chain and possibly in a chloroplast respiratory chain. The immediate electron acceptor for the enzyme in this species is believed to be plastoquinone. Couples the redox reaction to proton translocation, and thus conserves the redox energy in a proton gradient. This Brachypodium distachyon (Purple false brome) protein is NAD(P)H-quinone oxidoreductase subunit 3, chloroplastic.